A 266-amino-acid polypeptide reads, in one-letter code: Phosphate import ATP-binding protein PstB 2 (266 aa).

Residues 13–252 form the ABC transporter domain; it reads LEAQGVNVYY…GPTEEIFQNP (240 aa). 45 to 52 contacts ATP; the sequence is GPSGCGKS.

Belongs to the ABC transporter superfamily. Phosphate importer (TC 3.A.1.7) family. The complex is composed of two ATP-binding proteins (PstB), two transmembrane proteins (PstC and PstA) and a solute-binding protein (PstS).

Its subcellular location is the cell inner membrane. It catalyses the reaction phosphate(out) + ATP + H2O = ADP + 2 phosphate(in) + H(+). Its function is as follows. Part of the ABC transporter complex PstSACB involved in phosphate import. Responsible for energy coupling to the transport system. The sequence is that of Phosphate import ATP-binding protein PstB 2 from Synechocystis sp. (strain ATCC 27184 / PCC 6803 / Kazusa).